Reading from the N-terminus, the 275-residue chain is uncharacterized protein (275 aa).

[4Fe-4S] cluster-binding residues include Cys-97, Cys-102, Cys-136, and Cys-140. Cys-140 lines the siroheme pocket.

Belongs to the nitrite and sulfite reductase 4Fe-4S domain family.

This is an uncharacterized protein from Methanocaldococcus jannaschii (strain ATCC 43067 / DSM 2661 / JAL-1 / JCM 10045 / NBRC 100440) (Methanococcus jannaschii).